A 293-amino-acid polypeptide reads, in one-letter code: Chorion protein S36 (293 aa).

The first 20 residues, 1–20 (MQLGLWFGLFAVAAAPLVSA), serve as a signal peptide directing secretion. Residues 235–253 (QSYGQPQAYNQPQAYSQPQ) are compositionally biased toward polar residues. The disordered stretch occupies residues 235–293 (QSYGQPQAYNQPQAYSQPQSYGNSGSSGAGNSGPSSDSYAAGAETPLYASPAPYGSPSY).

This sequence belongs to the chorion protein S36 family.

The protein resides in the secreted. Chorion membrane (egg shell) protein; protects the egg from the environment. The sequence is that of Chorion protein S36 (Cp36) from Drosophila virilis (Fruit fly).